The chain runs to 840 residues: MAAYLFTCSILQTLSEAGKIEIAEDKLLHYLGELPGTPNGPVQLLENICTILEGQGRATHGNVIRHVLNIVVTEQELGGLGISGKSWEEVDEHTLHEIKFLTDAWLTAAESRAAARHLPQPLKQQDTRRLPMNLAEKILAHHAFSVPRRERVVAGDLLRVSIDWVIASELSWVGMKHSVTSLDMKPSAWRNDRFWLSGDHTVDPRTYHDKRVQALIKGLESAKRDLKMTENQGSNYTIMHTEFVRERAEPGMLVLGSDSHTCSAGAVSALAIGLGAGDVMAGLATGETWFKVPECIRINFTGQPAWYIGGKDVILSVLKQLKRNTYAAERIVEFGGAGAKLLSCDARFAISNMCTVRDPNDRPELKPTADDRSTSRNLVLLQAFLFPTVSLNRLSIAAGARYEGASYASTFEIDLGEVEPFIAIYPSPDQVCPVAERTGMRFDGCFIGACTTTEEDLVLAALVLEAGLKRGLTLEKGKRIVVPGSLPIVKNLRALGLLDIYKACGYEQPAPGCSLCLGIGADVAEAGSQWLSSQNRNFQNRMGRGAVGHICSAATVAASSFNMTLTDPCDLLNDVSETTFKEYLARCKVARGGSESKLAGGKQANNVQYIEPCLLGENARSAEGEVPALEAAAVSLDDARLGSINSRIYKLDDYVDTDAIIPAPACVGSPTDEMLGSHCFELTNPDFRDYVRSGHRVIVGGRAFGCGSSREEAPRALKGLGVQCVIARSFAFIFGRNMPNIGMLAIVLTDEAFYKAAQQGENIEVDVEGRVVHVAGQTFPFSLDDMELQLIRNRGLAASYQKLGSKVFAALCQKPAPLPISALADATLAQGGSIGRQMDW.

Substrate is bound at residue 258 to 260 (DSH). [4Fe-4S] cluster contacts are provided by C450, C513, and C516. Substrate contacts are provided by residues R536, R541, and 709-710 (SR).

It belongs to the aconitase/IPM isomerase family.

The protein operates within mycotoxin biosynthesis. Aconitase; part of the gene clusters that mediate the biosynthesis of AM-toxins, host-selective toxins (HSTs) causing Alternaria blotch on apple, a worldwide distributed disease. AM-toxins are cyclic depsipeptides containing the 3 residues 2-hydroxy-isovaleric acid (2-HIV), dehydroalanine, L-alanine which are common for all 3 AM-toxins I to III. The fourth precursor is L-alpha-amino-methoxyphenyl-valeric acid (L-Amv) for AM-toxin I, L-alpha-amino-phenyl-valeric acid (L-Apv) for AM-toxin II, and L-alpha-amino-hydroxyphenyl-valeric acid (L-Ahv) for AM-toxin III. AM-toxins have two target sites for affecting susceptible apple cells; they cause invagination of the plasma membrane and electrolyte loss and chloroplast disorganization. The non-ribosomal peptide synthetase AMT1 contains 4 catalytic modules and is responsible for activation of each residue in AM-toxin. The aldo-keto reductase AMT2 catalyzes the conversion of 2-keto-isovaleric acid (2-KIV) to 2-hydroxy-isovaleric acid (2-HIV), one of the precursor residues incorporated by AMT1 during AM-toxin biosynthesis, by reduction of its ketone to an alcohol. The cytochrome P450 monooxygenase AMT3 and the thioesterase AMT4 are also important for AM-toxin production, but their exact function within the AM-toxin biosynthesis are not known yet. Up to 21 proteins (including AMT1 to AMT4) are predicted to be involved in AM-toxin biosynthesis since their expression ishighly up-regulated in AM-toxin-producing cultures. This chain is Aconitase AMT8, found in Alternaria alternata (Alternaria rot fungus).